We begin with the raw amino-acid sequence, 580 residues long: Mitogen-activated protein kinase 12 (580 aa).

A disordered region spans residues 18-38; the sequence is RTASGSNQSSNAGEEAASSDL. Polar residues predominate over residues 20 to 29; the sequence is ASGSNQSSNA. The 292-residue stretch at 87 to 378 folds into the Protein kinase domain; it reads YQIQEVIGKG…AEEALADPYF (292 aa). Residues 93–101 and Lys-116 each bind ATP; that span reads IGKGSYGVV. Asp-213 functions as the Proton acceptor in the catalytic mechanism. Thr-249 carries the phosphothreonine modification. The TXY signature appears at 249–251; sequence TDY. A Phosphotyrosine modification is found at Tyr-251. The tract at residues 325 to 506 is required for kinase activity and nuclear localization; the sequence is ARRYLSTMRK…SADSVARTTV (182 aa). A disordered region spans residues 458-580; it reads YSKGERGSPL…LSEQVSRMHS (123 aa). The segment covering 502–543 has biased composition (polar residues); it reads ARTTVSPPMSQDAQQHGSAGQNGVTSTDLSSRSYLKSASISA. Residues 554–566 show a composition bias toward acidic residues; sequence EPEDDYISEEMEG.

This sequence belongs to the protein kinase superfamily. CMGC Ser/Thr protein kinase family. MAP kinase subfamily. As to quaternary structure, interacts with EREBP1. Post-translationally, dually phosphorylated on Thr-249 and Tyr-251, which activates the enzyme. Phosphorylated on tyrosine residue.

The protein localises to the cytoplasm. The protein resides in the nucleus. The enzyme catalyses L-seryl-[protein] + ATP = O-phospho-L-seryl-[protein] + ADP + H(+). It carries out the reaction L-threonyl-[protein] + ATP = O-phospho-L-threonyl-[protein] + ADP + H(+). With respect to regulation, activated by threonine and tyrosine phosphorylation. Activated in response to hydrogen peroxide, salicylic acid, jasmonic acid, ethylene, fungal elicitor and infection with rice blast fungus (M.grisea). May be involved in defense signaling pathway. Phosphorylates EREBP1 transcriptional activator in vitro. Enhances DNA-binding activity of EREBP1 to the GCC box element of pathogenesis-related (PR) gene promoters. In Oryza sativa subsp. japonica (Rice), this protein is Mitogen-activated protein kinase 12 (MPK12).